The following is a 173-amino-acid chain: Ribosome maturation factor RimM (173 aa).

In terms of domain architecture, PRC barrel spans 97-171; that stretch reads EGEFFYHEII…QITIEPMEGL (75 aa).

This sequence belongs to the RimM family. As to quaternary structure, binds ribosomal protein uS19.

It is found in the cytoplasm. An accessory protein needed during the final step in the assembly of 30S ribosomal subunit, possibly for assembly of the head region. Essential for efficient processing of 16S rRNA. May be needed both before and after RbfA during the maturation of 16S rRNA. It has affinity for free ribosomal 30S subunits but not for 70S ribosomes. This Halalkalibacterium halodurans (strain ATCC BAA-125 / DSM 18197 / FERM 7344 / JCM 9153 / C-125) (Bacillus halodurans) protein is Ribosome maturation factor RimM.